A 317-amino-acid polypeptide reads, in one-letter code: Adenosine receptor A3 (317 aa).

Residues 1–14 (MPVNSTAVSWTSVT) lie on the Extracellular side of the membrane. N-linked (GlcNAc...) asparagine glycosylation occurs at Asn4. A helical membrane pass occupies residues 15-37 (YITVEILIGLCAIVGNVLVIWVV). The Cytoplasmic portion of the chain corresponds to 38–48 (KLNPSLQTTTF). The helical transmembrane segment at 49–72 (YFIVSLALADIAVGVLVMPLAIVI) threads the bilayer. Residues 73–84 (SLGVTIHFYSCL) are Extracellular-facing. Cysteines 83 and 165 form a disulfide. Residues 85 to 106 (FMTCLMLIFTHASIMSLLAIAV) form a helical membrane-spanning segment. Residues 107-126 (DRYLRVKLTVRYRRVTTQRR) are Cytoplasmic-facing. Residues 127-148 (IWLALGLCWLVSFLVGLTPMFG) form a helical membrane-spanning segment. At 149-176 (WNMKLSSADENLTFLPCRFRSVMRMDYM) the chain is on the extracellular side. A glycan (N-linked (GlcNAc...) asparagine) is linked at Asn159. The helical transmembrane segment at 177–197 (VYFSFFLWILVPLVVMCAIYF) threads the bilayer. Residues 198–230 (DIFYIIRNRLSQSFSGSRETGAFYGREFKTAKS) lie on the Cytoplasmic side of the membrane. The chain crosses the membrane as a helical span at residues 231–254 (LLLVLFLFALCWLPLSIINCILYF). Over 255-260 (DGQVPQ) the chain is Extracellular. A helical transmembrane segment spans residues 261–283 (TVLYLGILLSHANSMMNPIVYAY). Residues 284–317 (KIKKFKETYLLILKACVMCQPSKSMDPSTEQTSE) lie on the Cytoplasmic side of the membrane. Cys302 is lipidated: S-palmitoyl cysteine.

It belongs to the G-protein coupled receptor 1 family. Phosphorylation on Thr-315 and Ser-316 may be crucial for rapid desensitization. Phosphorylation on Thr-315 may be necessary for phosphorylation on Ser-316 to occur. As to expression, most abundant in lung, spleen and pineal gland. Moderate expression in brain, kidney and testis.

The protein localises to the cell membrane. Functionally, receptor for adenosine. The activity of this receptor is mediated by G proteins which inhibits adenylyl cyclase. This Ovis aries (Sheep) protein is Adenosine receptor A3 (ADORA3).